The primary structure comprises 303 residues: Ribosomal protein L11 methyltransferase (303 aa).

S-adenosyl-L-methionine is bound by residues T146, G167, D189, and N236.

This sequence belongs to the methyltransferase superfamily. PrmA family.

It is found in the cytoplasm. The catalysed reaction is L-lysyl-[protein] + 3 S-adenosyl-L-methionine = N(6),N(6),N(6)-trimethyl-L-lysyl-[protein] + 3 S-adenosyl-L-homocysteine + 3 H(+). Functionally, methylates ribosomal protein L11. This Acinetobacter baylyi (strain ATCC 33305 / BD413 / ADP1) protein is Ribosomal protein L11 methyltransferase.